The sequence spans 230 residues: Large ribosomal subunit protein uL1 (230 aa).

The protein belongs to the universal ribosomal protein uL1 family. In terms of assembly, part of the 50S ribosomal subunit.

In terms of biological role, binds directly to 23S rRNA. The L1 stalk is quite mobile in the ribosome, and is involved in E site tRNA release. Protein L1 is also a translational repressor protein, it controls the translation of the L11 operon by binding to its mRNA. This Rhodopseudomonas palustris (strain BisB18) protein is Large ribosomal subunit protein uL1.